We begin with the raw amino-acid sequence, 1086 residues long: NAD(P) transhydrogenase, mitochondrial (1086 aa).

The N-terminal 43 residues, 1–43, are a transit peptide targeting the mitochondrion; it reads MAHLLKTVVAGCSCPFLSNLGSSKVLPGKRDFVRTLRTHQALW. Residues 44-474 lie on the Mitochondrial matrix side of the membrane; that stretch reads CKSPVKPGIP…TVSMYTKTLT (431 aa). The residue at position 70 (Lys70) is an N6-acetyllysine. An N6-succinyllysine modification is found at Lys117. 182–184 is a binding site for NAD(+); sequence RVT. Lys224 is modified (N6-succinyllysine). NAD(+)-binding positions include Val237, 257-259, and Gly287; that span reads DTR. Lys294 carries the N6-succinyllysine modification. Residues Glu300 and Leu319 each contribute to the NAD(+) site. Lys331 carries the N6-succinyllysine modification. Lys397 carries the post-translational modification N6-acetyllysine. Transmembrane regions (helical) follow at residues 475–493, 501–521, 527–546, and 558–578; these read TASV…GIVA, MVTT…GVTP, LMSV…LALM, and SLAA…FLVT. Over 579–595 the chain is Mitochondrial matrix; that stretch reads QRMLDMFKRPTDPPEYN. The next 5 membrane-spanning stretches (helical) occupy residues 596–616, 622–642, 646–666, 672–691, and 702–722; these read YLYL…LYGG, IMYL…STQG, LGNA…LGGL, LLAQ…LTIA, and LVAA…MAEY. At 723 to 739 the chain is on the cytoplasmic side; the sequence is IVEYPHFAMDATSNFTK. The next 5 membrane-spanning stretches (helical) occupy residues 740 to 760, 778 to 797, 801 to 819, 833 to 853, and 857 to 879; these read IVAY…LVAY, HALN…PFMA, FTTG…TLMG, VVIT…GFLL, and LLTI…MCVA. The Mitochondrial matrix segment spans residues 880-1086; that stretch reads MNRSLANVIL…QAKVRESYQK (207 aa). NADP(+) contacts are provided by residues Tyr933, 965–970, 1007–1011, 1026–1027, 1042–1049, and 1068–1069; these read VAGRMP, GANDT, GM, KRSLGVGY, and DA. Lys1079 carries the post-translational modification N6-succinyllysine.

In the N-terminal section; belongs to the AlaDH/PNT family. The protein in the C-terminal section; belongs to the PNT beta subunit family. As to quaternary structure, homodimer. As to expression, widely expressed with expression most readily detectable in adrenal, heart, kidney, thyroid and adipose tissues.

Its subcellular location is the mitochondrion inner membrane. It carries out the reaction NAD(+) + NADPH + H(+)(in) = NADH + NADP(+) + H(+)(out). In terms of biological role, the transhydrogenation between NADH and NADP is coupled to respiration and ATP hydrolysis and functions as a proton pump across the membrane. May play a role in reactive oxygen species (ROS) detoxification in the adrenal gland. This is NAD(P) transhydrogenase, mitochondrial (Nnt) from Mus musculus (Mouse).